Reading from the N-terminus, the 251-residue chain is Octanoyltransferase (251 aa).

The 223-residue stretch at 29–251 folds into the BPL/LPL catalytic domain; sequence AATPNSLWIC…GQKLSSYLAP (223 aa). Position 68–75 (68–75) interacts with substrate; it reads RGGQVTYH. The interval 137–174 is disordered; that stretch reads ARLRPSPQPSPKGRGSSTPVLLPPLPGEGGGGGGPDPD. Residues 184 to 186 and 197 to 199 contribute to the substrate site; these read ALG and GVA. Catalysis depends on Cys-215, which acts as the Acyl-thioester intermediate.

The protein belongs to the LipB family.

It localises to the cytoplasm. It carries out the reaction octanoyl-[ACP] + L-lysyl-[protein] = N(6)-octanoyl-L-lysyl-[protein] + holo-[ACP] + H(+). The protein operates within protein modification; protein lipoylation via endogenous pathway; protein N(6)-(lipoyl)lysine from octanoyl-[acyl-carrier-protein]: step 1/2. Catalyzes the transfer of endogenously produced octanoic acid from octanoyl-acyl-carrier-protein onto the lipoyl domains of lipoate-dependent enzymes. Lipoyl-ACP can also act as a substrate although octanoyl-ACP is likely to be the physiological substrate. The chain is Octanoyltransferase from Polaromonas sp. (strain JS666 / ATCC BAA-500).